Here is a 296-residue protein sequence, read N- to C-terminus: Cobalamin trafficking protein CblD (296 aa).

The N-terminal 38 residues, 1–38, are a transit peptide targeting the mitochondrion; that stretch reads MAHVLCNRARLVSYLPGFCSLVKRVINPRAFSTAGSSG. K203 is modified (N6-acetyllysine).

In terms of assembly, heterodimer with MMACHC. Forms a multiprotein complex with MMACHC, MTR and MTRR.

The protein resides in the cytoplasm. It is found in the mitochondrion. Functionally, involved in cobalamin metabolism and trafficking. Plays a role in regulating the biosynthesis and the proportion of two coenzymes, methylcob(III)alamin (MeCbl) and 5'-deoxyadenosylcobalamin (AdoCbl). Promotes oxidation of cob(II)alamin bound to MMACHC. The processing of cobalamin in the cytosol occurs in a multiprotein complex composed of at least MMACHC, MMADHC, MTRR (methionine synthase reductase) and MTR (methionine synthase) which may contribute to shuttle safely and efficiently cobalamin towards MTR in order to produce methionine. The sequence is that of Cobalamin trafficking protein CblD from Mus musculus (Mouse).